The primary structure comprises 308 residues: MDDENATLLTEFVLTGLTYQSEWKIPLFLAFLVIYLITIMANLGLIAVIWKDSHLHIPMYLFLGSLAFVDAWLSSSVTPKMLISFLAKSMIISVSECKIQFFSFGISGTTECFLLATMAYDRYVAICKPLLYPVIMTNGLCIWLLVLSFIGGFLHALIHEGILFRLTFCNSNIIHHFYCDIIPLLKISCTDPSINFLMLFILSGSIQVFTILTVLVSYTFVLFTILKKKAKDIRKAFSTCGAHLLSVSLYYGPLLFMYVHPASPQADDQDMVESLFYTVIIPFLNPIIYSLRNKQVIDSLTKTLKGNV.

The Extracellular segment spans residues 1–28 (MDDENATLLTEFVLTGLTYQSEWKIPLF). The chain crosses the membrane as a helical span at residues 29-49 (LAFLVIYLITIMANLGLIAVI). The Cytoplasmic segment spans residues 50–56 (WKDSHLH). Residues 57–77 (IPMYLFLGSLAFVDAWLSSSV) form a helical membrane-spanning segment. Topologically, residues 78 to 98 (TPKMLISFLAKSMIISVSECK) are extracellular. A disulfide bridge links cysteine 97 with cysteine 179. Residues 99-119 (IQFFSFGISGTTECFLLATMA) traverse the membrane as a helical segment. Topologically, residues 120–133 (YDRYVAICKPLLYP) are cytoplasmic. Residues 134–154 (VIMTNGLCIWLLVLSFIGGFL) traverse the membrane as a helical segment. The Extracellular portion of the chain corresponds to 155 to 195 (HALIHEGILFRLTFCNSNIIHHFYCDIIPLLKISCTDPSIN). A helical membrane pass occupies residues 196–216 (FLMLFILSGSIQVFTILTVLV). At 217–238 (SYTFVLFTILKKKAKDIRKAFS) the chain is on the cytoplasmic side. The helical transmembrane segment at 239-259 (TCGAHLLSVSLYYGPLLFMYV) threads the bilayer. Over 260–270 (HPASPQADDQD) the chain is Extracellular. The chain crosses the membrane as a helical span at residues 271–291 (MVESLFYTVIIPFLNPIIYSL). At 292-308 (RNKQVIDSLTKTLKGNV) the chain is on the cytoplasmic side.

Belongs to the G-protein coupled receptor 1 family.

It localises to the cell membrane. Its function is as follows. Odorant receptor. In Homo sapiens (Human), this protein is Olfactory receptor 5H8.